The primary structure comprises 321 residues: Cyclic AMP-AMP-AMP synthase (321 aa).

ATP is bound at residue K63. The Mg(2+) site is built by D72 and D74. ATP-binding positions include D74, H162, K185, 201–203, and N270; that span reads KSF.

The protein belongs to the CD-NTase family. A01 subfamily. In terms of assembly, forms complexes with Cap7 with 1:1 and 2:2 stoichimetry, and a 1:1:6 CdnC:Cap7:Cap6 complex. Mg(2+) serves as cofactor.

The catalysed reaction is 3 ATP = 3',3',3'-c-tri-AMP + 3 diphosphate. The enzyme catalyses 2 ATP = 3',3'-c-di-AMP + 2 diphosphate. The 2:2 CdnC:Cap7 (Cap7 is also called HORMA) complex is activated for cAAA synthesis by long dsDNA, but not 40 bp dsDNA or ssDNA; the 1:1 complex is inactive in vitro. The 2:2:DNA complex is catalytically disassembled and inactivated by Cap6 (also called Trip13). Its function is as follows. Cyclic nucleotide synthase (second messenger synthase) of a CBASS antivirus system. CBASS (cyclic oligonucleotide-based antiphage signaling system) provides immunity against bacteriophage. The CD-NTase protein synthesizes cyclic nucleotides in response to infection; these serve as specific second messenger signals. The signals activate a diverse range of effectors, leading to bacterial cell death and thus abortive phage infection. A type III-C(AAA) CBASS system. Functionally, cyclic nucleotide synthase that upon activation catalyzes the synthesis of 3',3',3'-cyclic AMP-AMP-AMP (3',3',3'-c-tri-AMP or cAAA) as the major product, and 3',3'-c-di-AMP as a minor product. Cannot use GTP as a substrate. Protects E.coli strain JP313 against bacteriophage lambda cI- infection. When the cdnC-cap7-cap6-nucC operon is transformed into a susceptible strain it confers bacteriophage immunity. Mutations in the sensor (Cap7 also called HORMA) or effector proteins (CdnC, NucC) but not the disassembly protein (Cap6 also called Trip13) no longer confer immunity. The presence of the intact operon leads to culture collapse and cell death, which occurs before the phage has finished its replication cycle, thus protecting non-infected bacteria by aborting the phage infection and preventing its propagation. The polypeptide is Cyclic AMP-AMP-AMP synthase (Escherichia coli (strain MS 115-1)).